The following is a 180-amino-acid chain: MLENDIKKVLYSEEDIILKTKELGAKLTADYAGKNPLLVGVLKGSVPFMAELLKHIDTHVEIDFMVVSSYHGGTTSSGEVKILKDVDTNIEGRDVIFIEDIIDTGRTLKYLRDMFKYRQANSVKVATLFDKPEGRLVDIDADYVCYDIPNEFIVGFGLDYAENYRNLPYVGVLKEEIYSK.

The diphosphate site is built by Lys-43 and Gly-44. 2 residues coordinate Mg(2+): Glu-99 and Asp-100. Asp-103 acts as the Proton acceptor in catalysis. GMP is bound by residues Lys-131, 152–153 (FI), and Asp-159. Arg-165 serves as a coordination point for diphosphate.

Belongs to the purine/pyrimidine phosphoribosyltransferase family. Requires Mg(2+) as cofactor.

Its subcellular location is the cytoplasm. The enzyme catalyses IMP + diphosphate = hypoxanthine + 5-phospho-alpha-D-ribose 1-diphosphate. It catalyses the reaction GMP + diphosphate = guanine + 5-phospho-alpha-D-ribose 1-diphosphate. The protein operates within purine metabolism; IMP biosynthesis via salvage pathway; IMP from hypoxanthine: step 1/1. It participates in purine metabolism; GMP biosynthesis via salvage pathway; GMP from guanine: step 1/1. In terms of biological role, purine salvage pathway enzyme that catalyzes the transfer of the ribosyl-5-phosphate group from 5-phospho-alpha-D-ribose 1-diphosphate (PRPP) to the N9 position of the 6-oxopurines hypoxanthine and guanine to form the corresponding ribonucleotides IMP (inosine 5'-monophosphate) and GMP (guanosine 5'-monophosphate), with the release of PPi. The sequence is that of Hypoxanthine-guanine phosphoribosyltransferase (hpt) from Streptococcus agalactiae serotype III (strain NEM316).